Reading from the N-terminus, the 147-residue chain is Hemoglobin subunit beta (147 aa).

Position 2 is an N-acetylvaline (valine 2). One can recognise a Globin domain in the interval 3–147; sequence HLTGDEKAAV…VANALAHKYH (145 aa). Position 13 is a phosphothreonine (threonine 13). A Phosphoserine modification is found at serine 45. Residue lysine 60 is modified to N6-acetyllysine. Histidine 64 contributes to the heme b binding site. Lysine 83 carries the N6-acetyllysine modification. Histidine 93 serves as a coordination point for heme b. An S-nitrosocysteine modification is found at cysteine 94. Lysine 145 bears the N6-acetyllysine mark.

It belongs to the globin family. Heterotetramer of two alpha chains and two beta chains. In terms of tissue distribution, red blood cells.

Involved in oxygen transport from the lung to the various peripheral tissues. The polypeptide is Hemoglobin subunit beta (HBB) (Alouatta belzebul (Red-handed howler monkey)).